The primary structure comprises 200 residues: MAKGDPKKPKGKMSAYAFFVQTCREEHKKKNPEVPVNFAEFSKKCSERWKTMSSKEKSKFDEMAKADKVRYDREMKDYGPAKGGKKKKDPNAPKRPPSGFFLFCSEFRPKIKSTNPGISIGDVAKKLGEMWNNLSDNEKQPYVTKAAKLKEKYEKDVADYKSKGKFDGAKGPAKVARKKVEEEEEEEEEEEEEEEEEEDE.

Position 3 is an N6-acetyllysine (lysine 3). DNA-binding regions (HMG box) lie at residues 9-79 (PKGK…KDYG) and 93-161 (PKRP…ADYK). Cysteine 23 bears the Cysteine sulfonic acid (-SO3H); alternate mark. An intrachain disulfide couples cysteine 23 to cysteine 45. Residues lysine 30 and lysine 43 each carry the N6-acetyllysine modification. A Cysteine sulfonic acid (-SO3H); alternate modification is found at cysteine 45. The disordered stretch occupies residues 71–97 (YDREMKDYGPAKGGKKKKDPNAPKRPP). Serine 98 bears the Phosphoserine mark. Cysteine 104 is modified (cysteine sulfonic acid (-SO3H)). N6-acetyllysine is present on residues lysine 112 and lysine 139. The segment at 161 to 200 (KSKGKFDGAKGPAKVARKKVEEEEEEEEEEEEEEEEEEDE) is disordered. Acidic residues predominate over residues 182 to 200 (EEEEEEEEEEEEEEEEEDE).

This sequence belongs to the HMGB family. Post-translationally, reduction/oxidation of cysteine residues Cys-23, Cys-45 and Cys-104 and a possible intramolecular disulfide bond involving Cys-23 and Cys-45 give rise to different redox forms with specific functional activities in various cellular compartments: 1- fully reduced HMGB3 (HMGB3C23hC45hC104h), 2- disulfide HMGB3 (HMGB3C23-C45C104h) and 3- sulfonyl HMGB3 (HMGB3C23soC45soC104so). Expressed in bone marrow cells, specifically in primitive Lin-, c-kit+, Sca-1+, IL-7Ralpha- cells, and Ter119+ erythroid cells.

The protein localises to the nucleus. It is found in the chromosome. Its subcellular location is the cytoplasm. Its function is as follows. Multifunctional protein with various roles in different cellular compartments. May act in a redox sensitive manner. Associates with chromatin and binds DNA with a preference for non-canonical DNA structures such as single-stranded DNA. Can bend DNA and enhance DNA flexibility by looping thus providing a mechanism to promote activities on various gene promoters. Proposed to be involved in the innate immune response to nucleic acids by acting as a cytoplasmic promiscuous immunogenic DNA/RNA sensor. Negatively regulates B-cell and myeloid cell differentiation. In hematopoietic stem cells may regulate the balance between self-renewal and differentiation. Involved in negative regulation of canonical Wnt signaling. This chain is High mobility group protein B3 (Hmgb3), found in Mus musculus (Mouse).